Reading from the N-terminus, the 87-residue chain is Translation initiation factor IF-1 2 (87 aa).

One can recognise an S1-like domain in the interval 1–72; that stretch reads MAKEEVIEME…TKGRINFRHK (72 aa).

It belongs to the IF-1 family. In terms of assembly, component of the 30S ribosomal translation pre-initiation complex which assembles on the 30S ribosome in the order IF-2 and IF-3, IF-1 and N-formylmethionyl-tRNA(fMet); mRNA recruitment can occur at any time during PIC assembly.

It is found in the cytoplasm. Its function is as follows. One of the essential components for the initiation of protein synthesis. Stabilizes the binding of IF-2 and IF-3 on the 30S subunit to which N-formylmethionyl-tRNA(fMet) subsequently binds. Helps modulate mRNA selection, yielding the 30S pre-initiation complex (PIC). Upon addition of the 50S ribosomal subunit IF-1, IF-2 and IF-3 are released leaving the mature 70S translation initiation complex. The sequence is that of Translation initiation factor IF-1 2 from Thiobacillus denitrificans (strain ATCC 25259 / T1).